The sequence spans 408 residues: Putative gustatory receptor 58b (408 aa).

The Cytoplasmic segment spans residues 1–44 (MLHPKLGRVMNVVYYHSVVFALMSTTLRIRSCRKCLRLEKVSRT). Residues 45 to 65 (YTIYSFFVGIFLFLNLYFMVP) form a helical membrane-spanning segment. Residues 66 to 82 (RIMEDGYMKYNIVLQWN) are Extracellular-facing. A helical membrane pass occupies residues 83 to 103 (FFVMLFLRAIAVVSCYGTLWL). Over 104–150 (KRHKIIQLYKYSLIYWKRFGHITRAIVDKKELLDLQESLARIMIRKI) the chain is Cytoplasmic. The chain crosses the membrane as a helical span at residues 151–171 (ILLYSAFLCSTVLQYQLLSVI). Residues 172-193 (NPQIFLAFCARLTHFLHFLCVK) are Extracellular-facing. Residues 194–214 (MGFFGVLVLLNHQFLVIHLAI) traverse the membrane as a helical segment. Residues 215-245 (NALHGRKARKKWKALRSVAAMHLKTLRLARR) are Cytoplasmic-facing. Residues 246-266 (IFDMFDIANATVFINMFMTAI) traverse the membrane as a helical segment. Topologically, residues 267–284 (NILYHAVQYSNSSIKSNG) are extracellular. N-linked (GlcNAc...) asparagine glycosylation occurs at Asn277. A helical membrane pass occupies residues 285 to 305 (WGILFGNGLIVFNFWGTMALM). Topologically, residues 306–364 (EMLDSVVTSCNNTGQQLRQLSDLPKVGPKMQRELDVFTMQLRQNRLVYKICGIVELDKP) are cytoplasmic. A helical membrane pass occupies residues 365–385 (ACLSYIGSILSNVIILMQFDL). The Extracellular portion of the chain corresponds to 386-408 (RRQRQPINDRQYLIHLMKNKTKV). Asn404 is a glycosylation site (N-linked (GlcNAc...) asparagine).

This sequence belongs to the insect chemoreceptor superfamily. Gustatory receptor (GR) family. Gr22e subfamily. Expressed in the adult labellar chemosensory neurons, labral sense organ and thorax. In larvae, is in neurons of the terminal external chemosensory organ as well as in the dorsal pharyngeal sense organ.

The protein resides in the cell membrane. In terms of biological role, probable gustatory receptor which mediates acceptance or avoidance behavior, depending on its substrates. This Drosophila melanogaster (Fruit fly) protein is Putative gustatory receptor 58b (Gr58b).